We begin with the raw amino-acid sequence, 178 residues long: Large ribosomal subunit protein uL13m (178 aa).

This sequence belongs to the universal ribosomal protein uL13 family. In terms of assembly, component of the mitochondrial ribosome large subunit (39S) which comprises a 16S rRNA and about 50 distinct proteins.

The protein resides in the mitochondrion. The polypeptide is Large ribosomal subunit protein uL13m (mRpL13) (Drosophila melanogaster (Fruit fly)).